We begin with the raw amino-acid sequence, 2210 residues long: RNA-directed RNA polymerase L (2210 aa).

Residues 26–284 (RDIFLSQHHP…SHKDSDVPSC (259 aa)) are endonuclease. Mn(2+) is bound by residues Glu-51, Asp-89, and Glu-102. The active site involves Lys-115. One can recognise a RdRp catalytic domain in the interval 1171–1368 (CDMKMAVNNG…FLSSKLNKFI (198 aa)). Asp-1329 serves as a coordination point for Mg(2+).

It belongs to the Bunyavirales RNA polymerase family. Homomultimer; the oligomeric structure is essential for the polymerase activity. Interacts with nucleoprotein N. Interacts with protein Z; this interaction inhibits viral transcription and replication, Z partially blocks the product exit tunnel for the releasing nascent RNA product. The cofactor is Mn(2+). Mg(2+) is required as a cofactor.

The protein resides in the virion. It is found in the host cytoplasm. It catalyses the reaction RNA(n) + a ribonucleoside 5'-triphosphate = RNA(n+1) + diphosphate. Functionally, RNA-dependent RNA polymerase, which is responsible for the replication and transcription of the viral RNA genome using antigenomic RNA as an intermediate. During transcription, synthesizes subgenomic RNAs and assures their capping by a cap-snatching mechanism, which involves the endonuclease activity cleaving the host capped pre-mRNAs. These short capped RNAs are then used as primers for viral transcription. The 3'-end of subgenomic mRNAs molecules are heterogeneous and not polyadenylated. The replicase function is to direct synthesis of antigenomic and genomic RNA which are encapsidated and non capped. As a consequence of the use of the same enzyme for both transcription and replication, these mechanisms need to be well coordinated. These processes may be regulated by proteins N and Z in a dose-dependent manner. Z protein inhibits the viral polymerase L und thus the viral transcription and RNA synthesis. This Junin mammarenavirus (JUNV) protein is RNA-directed RNA polymerase L.